We begin with the raw amino-acid sequence, 913 residues long: Tyrosine-protein phosphatase non-receptor type 3 (913 aa).

The region spanning 29-312 (VICSIRFLDG…EHHSFFQAKK (284 aa)) is the FERM domain. 3 positions are modified to phosphoserine: Ser-357, Ser-359, and Ser-367. 2 disordered regions span residues 364 to 400 (ETKS…DNLA) and 417 to 473 (KGPL…PDGV). At Thr-376 the chain carries Phosphothreonine. Ser-381 bears the Phosphoserine mark. Basic residues predominate over residues 382 to 393 (PRLRHEIRKPRH). Ser-425 is subject to Phosphoserine. Positions 441–453 (SENNPAQSCLTQK) are enriched in polar residues. Positions 454–470 (SSSSVSPSSNAPGSCSP) are enriched in low complexity. The region spanning 510–582 (LIRITPDEEG…DQVVMFIKAS (73 aa)) is the PDZ domain. A Tyrosine-protein phosphatase domain is found at 646-901 (VLIQFEQLYR…KFVCEAILRV (256 aa)). Substrate-binding positions include Asp-811, 842-848 (CSAGIGR), and Gln-886. The active-site Phosphocysteine intermediate is the Cys-842.

This sequence belongs to the protein-tyrosine phosphatase family. Non-receptor class subfamily.

Its subcellular location is the cell membrane. It is found in the cytoplasm. The protein localises to the cytoskeleton. The catalysed reaction is O-phospho-L-tyrosyl-[protein] + H2O = L-tyrosyl-[protein] + phosphate. Its function is as follows. May act at junctions between the membrane and the cytoskeleton. The polypeptide is Tyrosine-protein phosphatase non-receptor type 3 (Ptpn3) (Mus musculus (Mouse)).